Here is a 206-residue protein sequence, read N- to C-terminus: Thymidylate kinase (206 aa).

10–17 lines the ATP pocket; sequence GIDGAGKS.

The protein belongs to the thymidylate kinase family.

The enzyme catalyses dTMP + ATP = dTDP + ADP. In terms of biological role, phosphorylation of dTMP to form dTDP in both de novo and salvage pathways of dTTP synthesis. The sequence is that of Thymidylate kinase (tmk) from Neisseria meningitidis serogroup A / serotype 4A (strain DSM 15465 / Z2491).